The chain runs to 284 residues: MLIIETLPLLRQHIRRLRQEGKRIALVPTMGNLHDGHMKLVDEARARADVVVVSIFVNPMQFDRADDLARYPRTLQEDCEKLKKRHVDFVFSPVPSDIYPQGTEGATYVDVPGISTMLEGASRPGHFRGVSTIVSKLFNLVQPDIACFGEKDFQQLALIRKMVADMGYDIEIVGVPIVRAKDGLALSSRNGYLTADQRKIAPGLCKVMNAMAEQLKAKELTTEEIVALAEQELNDKGLRADDIQIRDADTLLELSATSKRAVILVAAWLGQARLIDNKVVELAE.

Residue 30-37 coordinates ATP; that stretch reads MGNLHDGH. Catalysis depends on histidine 37, which acts as the Proton donor. Glutamine 61 serves as a coordination point for (R)-pantoate. Glutamine 61 is a binding site for beta-alanine. 149 to 152 is a binding site for ATP; the sequence is GEKD. Glutamine 155 lines the (R)-pantoate pocket. ATP contacts are provided by residues valine 178 and 186–189; that span reads LSSR.

Belongs to the pantothenate synthetase family. In terms of assembly, homodimer.

Its subcellular location is the cytoplasm. It catalyses the reaction (R)-pantoate + beta-alanine + ATP = (R)-pantothenate + AMP + diphosphate + H(+). It functions in the pathway cofactor biosynthesis; (R)-pantothenate biosynthesis; (R)-pantothenate from (R)-pantoate and beta-alanine: step 1/1. In terms of biological role, catalyzes the condensation of pantoate with beta-alanine in an ATP-dependent reaction via a pantoyl-adenylate intermediate. In Enterobacter sp. (strain 638), this protein is Pantothenate synthetase.